Reading from the N-terminus, the 156-residue chain is Small ribosomal subunit protein uS7 (156 aa).

The protein belongs to the universal ribosomal protein uS7 family. Part of the 30S ribosomal subunit. Contacts proteins S9 and S11.

Functionally, one of the primary rRNA binding proteins, it binds directly to 16S rRNA where it nucleates assembly of the head domain of the 30S subunit. Is located at the subunit interface close to the decoding center, probably blocks exit of the E-site tRNA. This chain is Small ribosomal subunit protein uS7, found in Bacillus cereus (strain ZK / E33L).